The chain runs to 690 residues: uncharacterized protein (690 aa).

Residues 553–601 form a disordered region; it reads DESELLENEDKSESLENEDKSESLENEDKSESLENEDKSESLENEKKEK. A compositionally biased stretch (basic and acidic residues) spans 560–601; that stretch reads NEDKSESLENEDKSESLENEDKSESLENEDKSESLENEKKEK.

This sequence belongs to the glycosyltransferase 2 family.

This is an uncharacterized protein from Rickettsia bellii (strain RML369-C).